The following is a 261-amino-acid chain: Global transcriptional regulator CodY (261 aa).

The tract at residues 1–159 (MANLLSKTRR…SSTVVGIQLL (159 aa)) is GAF domain. Positions 207-226 (ASVIADRIGITRSVIVNALR) form a DNA-binding region, H-T-H motif.

It belongs to the CodY family.

It localises to the cytoplasm. Its function is as follows. DNA-binding global transcriptional regulator which is involved in the adaptive response to starvation and acts by directly or indirectly controlling the expression of numerous genes in response to nutrient availability. During rapid exponential growth, CodY is highly active and represses genes whose products allow adaptation to nutrient depletion. The polypeptide is Global transcriptional regulator CodY (Streptococcus mutans serotype c (strain ATCC 700610 / UA159)).